Here is a 184-residue protein sequence, read N- to C-terminus: Protein GrpE (184 aa).

The span at 1-14 (MANEQNEQSQDLSS) shows a compositional bias: polar residues. A disordered region spans residues 1-35 (MANEQNEQSQDLSSEQTTQDHEQTQTEGVEQGAEI).

It belongs to the GrpE family. As to quaternary structure, homodimer.

The protein resides in the cytoplasm. In terms of biological role, participates actively in the response to hyperosmotic and heat shock by preventing the aggregation of stress-denatured proteins, in association with DnaK and GrpE. It is the nucleotide exchange factor for DnaK and may function as a thermosensor. Unfolded proteins bind initially to DnaJ; upon interaction with the DnaJ-bound protein, DnaK hydrolyzes its bound ATP, resulting in the formation of a stable complex. GrpE releases ADP from DnaK; ATP binding to DnaK triggers the release of the substrate protein, thus completing the reaction cycle. Several rounds of ATP-dependent interactions between DnaJ, DnaK and GrpE are required for fully efficient folding. The polypeptide is Protein GrpE (Acinetobacter baylyi (strain ATCC 33305 / BD413 / ADP1)).